The chain runs to 701 residues: Dynein axonemal intermediate chain 1 (701 aa).

Disordered regions lie at residues 1 to 45 (MPSK…VRPP) and 119 to 165 (EMVA…DIPA). A phosphoserine mark is found at Ser124 and Ser127. Residues 136 to 155 (ENLEEEEEPKEGEGEAEAEA) show a composition bias toward acidic residues. WD repeat units follow at residues 382–422 (SSES…SQPC), 431–474 (KHTD…LVHI), 539–579 (AHNM…PMFI), 581–621 (DLNS…YEAI), and 629–668 (KKKN…RKMP).

The protein belongs to the dynein intermediate chain family. As to quaternary structure, consists of at least two heavy chains and a number of intermediate and light chains. Interacts with BICD2. Interacts with CFAP45 and CFAP52. Interacts with CFAP53.

Its subcellular location is the cytoplasm. The protein resides in the cytoskeleton. It is found in the cilium axoneme. Its function is as follows. Part of the dynein complex of respiratory cilia. The sequence is that of Dynein axonemal intermediate chain 1 (Dnai1) from Mus musculus (Mouse).